A 217-amino-acid chain; its full sequence is C-type lectin domain family 2 member I (217 aa).

Over 1 to 53 the chain is Cytoplasmic; it reads MPDCLETGEKLFVHNMNAQCVQKPEEGNGPLGTGGKIVQGKCFRIISTVSPVK. A helical; Signal-anchor for type II membrane protein membrane pass occupies residues 54–74; that stretch reads LYCCYGVIMVLTVAVIALSVA. Over 75–217 the chain is Extracellular; sequence LSTKKTEQII…YNLHCQTPPV (143 aa). A disulfide bridge connects residues Cys-92 and Cys-103. The 105-residue stretch at 99–203 folds into the C-type lectin domain; that stretch reads VGNKCFYFSG…SYINRMWICS (105 aa). The N-linked (GlcNAc...) asparagine glycan is linked to Asn-112. A disulfide bond links Cys-120 and Cys-202.

In terms of tissue distribution, detected in osteoblasts, growth plate chondrocytes and skeletal muscle overlying the bone (at protein level). Detected in spleen, B-cells, dendritic cells, thymus, and in IL2-activated natural killer cells.

It localises to the cell membrane. Its function is as follows. Inhibits osteoclast formation. Receptor for KLRB1F. Enhances T-cell activation. Plays a role in splenocyte activation, T-cell responses and IL-2 production. This chain is C-type lectin domain family 2 member I (Clec2i), found in Mus musculus (Mouse).